Here is a 363-residue protein sequence, read N- to C-terminus: MENQYKVELHNVTKEYDLYRSNNDKLKHFFNIGNVDVPRFWSLKGVSLNVKPGEALGIIGINGSGKSTISNIISGIIPQTTGTVDVHGDTSIISIGAGLKWNLTGDENIRLKGLMQGLSIKEIQAVRDDIVDFADIGDFIGQPVKDYSTGMRSRLGFAIAVHINPDIMIIDEALSVGDDTFYQKCVDKIMEFKKQGKTIIFVSHNLRQVELLCDRVAWMHFGDLLEVGETKETVDHYRKFSKDFKAQTAAYRKKYQVGKKKEQADFDIVAYERQLVEEKAKDSDKSKQAVSRQVHRTLYKQILPEKMTIATKLVMLVAIVLFVFFALVNVSGHSVTSAIENPTVLLHPVNHYIKSQSVLFNSK.

The 220-residue stretch at Lys27–Ala246 folds into the ABC transporter domain. Residue Gly60–Ser67 coordinates ATP. The segment at Gln247–Lys363 is unknown.

This sequence belongs to the ABC transporter superfamily. Teichoic acids exporter (TC 3.A.1.104.1) family. In terms of assembly, the complex is composed of two ATP-binding proteins (TagH) and two transmembrane proteins (TagG).

It localises to the cell membrane. The enzyme catalyses ATP + H2O + teichoic acidSide 1 = ADP + phosphate + teichoic acidSide 2.. Part of the ABC transporter complex TagGH involved in teichoic acids export. Responsible for energy coupling to the transport system. The chain is Teichoic acids export ATP-binding protein TagH from Lactiplantibacillus plantarum (strain ATCC BAA-793 / NCIMB 8826 / WCFS1) (Lactobacillus plantarum).